The primary structure comprises 387 residues: MEQVVIVDAIRTPMSRSKGGAFRNVRAEDLSAHLMRSLLARNPALEAAALDDIYWGCVQQTLEQGFNIARNAALLAEVPHSVPAVTVNRLCGSSMQALHDAARMIMSGDAQACLVGGVEHMGHVPMSHGVDFHPGLSRNVAKAAGMMGLTAEMLARMHGISREMQDAFAARSHARAWAATQSGAFKNEIIPTGGHDADGVLKQFNYDEVIRPETTVEALATLRPAFDPVSGTVTAGTSSALSDGAAAMLVMSESRAHELGLKPRARVRSMAVVGCDPAIMGYGPVPASKLALKKAGLSVSDIGVFEMNEAFAAQILPCIKDLGLIEQIDEKINLNGGAIALGHPLGCSGARISTTLLNLMERKDVQFGLATMCIGLGQGIATVFERV.

C91 (acyl-thioester intermediate) is an active-site residue. Active-site proton acceptor residues include H343 and C373.

It belongs to the thiolase-like superfamily. Thiolase family. As to quaternary structure, heterotetramer of two alpha chains (FadB) and two beta chains (FadA).

Its subcellular location is the cytoplasm. The enzyme catalyses an acyl-CoA + acetyl-CoA = a 3-oxoacyl-CoA + CoA. Its pathway is lipid metabolism; fatty acid beta-oxidation. Catalyzes the final step of fatty acid oxidation in which acetyl-CoA is released and the CoA ester of a fatty acid two carbons shorter is formed. The chain is 3-ketoacyl-CoA thiolase from Escherichia coli O139:H28 (strain E24377A / ETEC).